We begin with the raw amino-acid sequence, 498 residues long: Probable global transactivator (498 aa).

One can recognise a Helicase ATP-binding domain in the interval 43–206 (RERRGRPHGG…YAIIHFLRCR (164 aa)). 55–63 (ADDMGLGKT) serves as a coordination point for ATP. The short motif at 157 to 160 (DEAH) is the DEAH box element. In terms of domain architecture, Helicase C-terminal spans 337 to 493 (ELVQRVLDTP…RTALNYEDIK (157 aa)).

This sequence belongs to the SNF2/RAD54 helicase family.

The sequence is that of Probable global transactivator (GTA) from Orgyia pseudotsugata (Douglas-fir tussock moth).